Consider the following 419-residue polypeptide: Putative nucleobase-ascorbate transporter 9 (419 aa).

Positions 1–22 are enriched in gly residues; the sequence is MANGAGNGGGGAGGNGGGGNNG. Positions 1–28 are disordered; it reads MANGAGNGGGGAGGNGGGGNNGAGNRAE. The next 10 membrane-spanning stretches (helical) occupy residues 64 to 84, 91 to 111, 113 to 133, 153 to 173, 184 to 204, 220 to 240, 273 to 293, 313 to 333, 334 to 354, and 370 to 390; these read LLSL…MGGG, VIQT…FFGT, LPVI…IIYS, IQGA…LGVW, SIAP…FPLV, GMML…SSGV, SFAM…LFYA, RVIQ…KFGA, FFAS…LCFV, and FNTK…PQYF.

It belongs to the nucleobase:cation symporter-2 (NCS2) (TC 2.A.40) family.

It is found in the membrane. The sequence is that of Putative nucleobase-ascorbate transporter 9 (NAT9) from Arabidopsis thaliana (Mouse-ear cress).